The chain runs to 210 residues: ATP-dependent Clp protease proteolytic subunit (210 aa).

Ser-107 (nucleophile) is an active-site residue. Residue His-132 is part of the active site.

This sequence belongs to the peptidase S14 family. In terms of assembly, fourteen ClpP subunits assemble into 2 heptameric rings which stack back to back to give a disk-like structure with a central cavity, resembling the structure of eukaryotic proteasomes.

It localises to the cytoplasm. It carries out the reaction Hydrolysis of proteins to small peptides in the presence of ATP and magnesium. alpha-casein is the usual test substrate. In the absence of ATP, only oligopeptides shorter than five residues are hydrolyzed (such as succinyl-Leu-Tyr-|-NHMec, and Leu-Tyr-Leu-|-Tyr-Trp, in which cleavage of the -Tyr-|-Leu- and -Tyr-|-Trp bonds also occurs).. Functionally, cleaves peptides in various proteins in a process that requires ATP hydrolysis. Has a chymotrypsin-like activity. Plays a major role in the degradation of misfolded proteins. The polypeptide is ATP-dependent Clp protease proteolytic subunit (Cereibacter sphaeroides (strain ATCC 17029 / ATH 2.4.9) (Rhodobacter sphaeroides)).